Reading from the N-terminus, the 255-residue chain is Taurine import ATP-binding protein TauB (255 aa).

The ABC transporter domain occupies 2-229 (LNVSGLWAEY…RYAEGEPCRA (228 aa)). 34 to 41 (GPSGCGKT) is a binding site for ATP.

It belongs to the ABC transporter superfamily. Taurine importer (TC 3.A.1.17.1) family. In terms of assembly, the complex is composed of two ATP-binding proteins (TauB), two transmembrane proteins (TauC) and a solute-binding protein (TauA).

It localises to the cell inner membrane. It carries out the reaction taurine(out) + ATP + H2O = taurine(in) + ADP + phosphate + H(+). Its function is as follows. Part of the ABC transporter complex TauABC involved in taurine import. Responsible for energy coupling to the transport system. The chain is Taurine import ATP-binding protein TauB from Yersinia pseudotuberculosis serotype I (strain IP32953).